A 314-amino-acid polypeptide reads, in one-letter code: tRNA pseudouridine synthase B (314 aa).

Catalysis depends on aspartate 47, which acts as the Nucleophile.

Belongs to the pseudouridine synthase TruB family. Type 1 subfamily.

It catalyses the reaction uridine(55) in tRNA = pseudouridine(55) in tRNA. Responsible for synthesis of pseudouridine from uracil-55 in the psi GC loop of transfer RNAs. The chain is tRNA pseudouridine synthase B from Vibrio parahaemolyticus serotype O3:K6 (strain RIMD 2210633).